We begin with the raw amino-acid sequence, 408 residues long: Glutathione-independent formaldehyde dehydrogenase (408 aa).

Cysteine 61 is a binding site for Zn(2+). Residues glycine 62, serine 63, and histidine 66 each coordinate NAD(+). Residues histidine 82, cysteine 112, cysteine 115, cysteine 118, cysteine 126, and aspartate 184 each contribute to the Zn(2+) site. Residues valine 212, aspartate 232, arginine 237, valine 277, histidine 284, proline 311, leucine 313, glycine 348, and threonine 350 each contribute to the NAD(+) site.

It belongs to the zinc-containing alcohol dehydrogenase family. It depends on Zn(2+) as a cofactor.

It carries out the reaction formaldehyde + NAD(+) + H2O = formate + NADH + 2 H(+). With respect to regulation, activity is not inhibited by EDTA, which is probably not sufficient to displace the bound metal. Its function is as follows. Dehydrogenase that catalyzes the NAD(+)-dependent oxidation of formaldehyde. Exhibits lower activity with acetaldehyde (about 10-fold lower than for formaldehyde), but cannot use methanol, ethanol, 1-butanol, glyoxal or formic acid. Is involved in formaldehyde detoxification. The sequence is that of Glutathione-independent formaldehyde dehydrogenase from Bacillus subtilis (strain 168).